The sequence spans 149 residues: MHCPFCSATDTKVIDSRLVADGHQVRRRRECVQCHERFTTFEGAELVMPRVVKQDGSRQPFDEEKLRGGMLRAVEKRPVSMDQIEQALTKIKSTLRATGEREVKSEMIGNLMMDHLVNLDKVAYIRFASVYRAFEDVSEFGDAIAKLQK.

A zinc finger lies at Cys3 to Cys34. The 91-residue stretch at Pro49–Glu139 folds into the ATP-cone domain.

Belongs to the NrdR family. Zn(2+) is required as a cofactor.

Functionally, negatively regulates transcription of bacterial ribonucleotide reductase nrd genes and operons by binding to NrdR-boxes. This chain is Transcriptional repressor NrdR, found in Shewanella halifaxensis (strain HAW-EB4).